The chain runs to 246 residues: TVP38/TMEM64 family membrane protein MT0653 (246 aa).

Helical transmembrane passes span 19 to 39 (LVVF…TDVI), 57 to 77 (LTYV…PILA), 83 to 103 (LFGP…TAVV), 157 to 177 (AFGT…IGSA), and 196 to 216 (LLAS…AFAA).

This sequence belongs to the TVP38/TMEM64 family.

It localises to the cell membrane. This is TVP38/TMEM64 family membrane protein MT0653 from Mycobacterium tuberculosis (strain CDC 1551 / Oshkosh).